Here is a 412-residue protein sequence, read N- to C-terminus: Phosphoglycerate kinase (412 aa).

Substrate-binding positions include 24 to 26 (DLN), R40, 63 to 66 (HLGR), R122, and R162. ATP contacts are provided by residues K212, G300, E331, and 360-363 (GGDS).

The protein belongs to the phosphoglycerate kinase family. In terms of assembly, monomer.

The protein resides in the cytoplasm. It carries out the reaction (2R)-3-phosphoglycerate + ATP = (2R)-3-phospho-glyceroyl phosphate + ADP. It functions in the pathway carbohydrate degradation; glycolysis; pyruvate from D-glyceraldehyde 3-phosphate: step 2/5. The protein is Phosphoglycerate kinase (pgk) of Mycobacterium bovis (strain ATCC BAA-935 / AF2122/97).